The following is a 304-amino-acid chain: Nucleotide-binding protein KRH_12070 (304 aa).

An ATP-binding site is contributed by 27–34; the sequence is GMSGAGRS. 78–81 is a GTP binding site; sequence DVRG.

The protein belongs to the RapZ-like family.

Functionally, displays ATPase and GTPase activities. In Kocuria rhizophila (strain ATCC 9341 / DSM 348 / NBRC 103217 / DC2201), this protein is Nucleotide-binding protein KRH_12070.